Consider the following 413-residue polypeptide: Coiled-coil domain-containing protein 83 (413 aa).

Coiled coils occupy residues 32–186 (HCQI…RIIR) and 215–255 (IWEN…QLFN).

This Bos taurus (Bovine) protein is Coiled-coil domain-containing protein 83 (CCDC83).